The sequence spans 218 residues: Ras-related protein Rab-4A (218 aa).

Residues G23, T24, G25, K26, S27, C28, S42, H44, and T45 each coordinate GTP. Mg(2+) is bound at residue S27. The Switch 1 motif lies at 44–49; that stretch reads HTIGVE. Mg(2+) contacts are provided by T45 and D68. The short motif at 70–79 is the Switch 2 element; sequence AGQERFRSVT. Residue G71 coordinates GTP. The residue at position 72 (Q72) is a 5-glutamyl serotonin. Residues N126, K127, D129, A157, and L158 each contribute to the GTP site. S190 is modified (phosphoserine). At S204 the chain carries Phosphoserine; by CDK1. Residues C216 and C218 are each lipidated (S-geranylgeranyl cysteine). C218 bears the Cysteine methyl ester mark.

It belongs to the small GTPase superfamily. Rab family. Interacts with RAB11FIP1, RABEP1, ZFYVE20 and RUFY1. Interacts with SGSM1, SGSM2 and SGSM3. Interacts (membrane-bound form) with NDRG1; the interaction involves NDRG1 in vesicular recycling of E-cadherin. Interacts (in GTP-bound form) with GRIPAP1. Interacts with RABEP1 and RBSN. Does not interact with HPS4. The cofactor is Mg(2+). In terms of processing, serotonylation of Gln-72 by TGM2 during activation and aggregation of platelets leads to constitutive activation of GTPase activity. Post-translationally, phosphorylated by CDK1 kinase during mitosis.

The protein localises to the membrane. It localises to the cytoplasm. It is found in the early endosome membrane. The protein resides in the recycling endosome membrane. The catalysed reaction is GTP + H2O = GDP + phosphate + H(+). With respect to regulation, regulated by guanine nucleotide exchange factors (GEFs) which promote the exchange of bound GDP for free GTP. Regulated by GTPase activating proteins (GAPs) which increase the GTP hydrolysis activity. Inhibited by GDP dissociation inhibitors (GDIs). The small GTPases Rab are key regulators of intracellular membrane trafficking, from the formation of transport vesicles to their fusion with membranes. Rabs cycle between an inactive GDP-bound form and an active GTP-bound form that is able to recruit to membranes different sets of downstream effectors directly responsible for vesicle formation, movement, tethering and fusion. RAB4A is involved in protein transport. Also plays a role in vesicular traffic. Mediates VEGFR2 endosomal trafficking to enhance VEGFR2 signaling. Acts as a regulator of platelet alpha-granule release during activation and aggregation of platelets. The chain is Ras-related protein Rab-4A (RAB4A) from Bos taurus (Bovine).